Reading from the N-terminus, the 205-residue chain is COP9 signalosome complex subunit 7 (205 aa).

One can recognise a PCI domain in the interval methionine 1–glutamate 135. At serine 183 the chain carries Phosphoserine.

This sequence belongs to the CSN7/EIF3M family. CSN7 subfamily. In terms of assembly, component of the COP9 signalosome (CSN) complex.

In terms of biological role, component of the COP9 signalosome (CSN) complex that acts as an regulator of the ubiquitin (Ubl) conjugation pathway by mediating the deneddylation of the cullin subunit of SCF-type E3 ubiquitin-protein ligase complexes. In Schizosaccharomyces pombe (strain 972 / ATCC 24843) (Fission yeast), this protein is COP9 signalosome complex subunit 7 (csn71).